Consider the following 93-residue polypeptide: uncharacterized protein (93 aa).

This is an uncharacterized protein from Methanocaldococcus jannaschii (strain ATCC 43067 / DSM 2661 / JAL-1 / JCM 10045 / NBRC 100440) (Methanococcus jannaschii).